The following is a 48-amino-acid chain: Disintegrin leucogastin-A (48 aa).

A Disintegrin domain is found at 1–47 (DCASGPCCRDCKFLEEFTICNMARGDDMNDYCNGKTCDCPRNPHKWP). Disulfide bonds link C2/C11, C7/C32, C8/C37, and C20/C39. Positions 24 to 26 (RGD) match the Cell attachment site motif.

It belongs to the venom metalloproteinase (M12B) family. P-II subfamily. P-IIa sub-subfamily. In terms of assembly, monomer (disintegrin). In terms of tissue distribution, expressed by the venom gland.

It is found in the secreted. Inhibits ADP-induced human platelet aggregation. This Echis leucogaster (Roman's saw-scaled viper) protein is Disintegrin leucogastin-A.